The sequence spans 309 residues: Olfactory receptor 1A2 (309 aa).

The Extracellular portion of the chain corresponds to 1-25 (MKKENQSFNLDFILLGVTSQQEQNN). N-linked (GlcNAc...) asparagine glycosylation is present at Asn5. The chain crosses the membrane as a helical span at residues 26–49 (VFFVIFLCIYPITLTGNLLIILAI). At 50 to 57 (CADIRLHN) the chain is on the cytoplasmic side. A helical transmembrane segment spans residues 58–79 (PMYFLLANLSLVDIIFSSVTIP). Residues 80-100 (KVLANHLLGSKFISFGGCLMQ) lie on the Extracellular side of the membrane. A disulfide bond links Cys97 and Cys189. The helical transmembrane segment at 101-120 (MYFMIALAKADSYTLAAMAY) threads the bilayer. Over 121–139 (DRAVAISCPLHYTTIMSPR) the chain is Cytoplasmic. The chain crosses the membrane as a helical span at residues 140 to 158 (SCILLIAGSWVIGNTSALP). Residues 159–195 (HTLLTASLSFCGNQEVANFYCDIMPLLKLSCSDVHFN) are Extracellular-facing. Residues 196-218 (VKMMYLGVGVFSLPLLCIIVSYV) form a helical membrane-spanning segment. At 219–235 (QVFSTVFQVPSTKSLFK) the chain is on the cytoplasmic side. The chain crosses the membrane as a helical span at residues 236-258 (AFCTCGSHLTVVFLYYGTTMGMY). The Extracellular segment spans residues 259–270 (FRPLTSYSPKDA). Residues 271–290 (VITVMYVAVTPALNPFIYSL) traverse the membrane as a helical segment. Residues 291–309 (RNWDMKAALQKLFSKRISS) are Cytoplasmic-facing.

It belongs to the G-protein coupled receptor 1 family.

The protein resides in the cell membrane. Functionally, odorant receptor. The polypeptide is Olfactory receptor 1A2 (OR1A2) (Homo sapiens (Human)).